We begin with the raw amino-acid sequence, 273 residues long: WIMGHMVNAIAQIDEFVNLGANSIETDVSFDKNANPEYTYHGIPCGCGRTCTKSEKFNVFLQGLQKATTPGDSKYQEKLVLVVFDLKSSSLYDNQASDAGKKLAKSLLQNYWKNGNNGGRAYIVLSIPNLAHYKLITGFKETLKTEGHPELMEKVGYDFFGNDDIDQVAKAYKKAGVTGHVWQSDGITNCLPRGLDRVKQAVANRDSSNGFINKVYYWTVDKRSTTRGALDAGVDGIMTNYPDVIADVLSESAYKSKFRIATYEDNPWETFKN.

H5 is an active-site residue. Mg(2+)-binding residues include E25 and D27. The active-site Nucleophile is the H41. Disulfide bonds link C45–C51 and C47–C190. A Mg(2+)-binding site is contributed by D85.

It belongs to the arthropod phospholipase D family. Class II subfamily. Mg(2+) is required as a cofactor. In terms of tissue distribution, expressed by the venom gland.

The protein resides in the secreted. It catalyses the reaction an N-(acyl)-sphingosylphosphocholine = an N-(acyl)-sphingosyl-1,3-cyclic phosphate + choline. The catalysed reaction is an N-(acyl)-sphingosylphosphoethanolamine = an N-(acyl)-sphingosyl-1,3-cyclic phosphate + ethanolamine. It carries out the reaction a 1-acyl-sn-glycero-3-phosphocholine = a 1-acyl-sn-glycero-2,3-cyclic phosphate + choline. The enzyme catalyses a 1-acyl-sn-glycero-3-phosphoethanolamine = a 1-acyl-sn-glycero-2,3-cyclic phosphate + ethanolamine. Dermonecrotic toxins cleave the phosphodiester linkage between the phosphate and headgroup of certain phospholipids (sphingolipid and lysolipid substrates), forming an alcohol (often choline) and a cyclic phosphate. This toxin acts on sphingomyelin (SM). It may also act on ceramide phosphoethanolamine (CPE), lysophosphatidylcholine (LPC) and lysophosphatidylethanolamine (LPE), but not on lysophosphatidylserine (LPS), and lysophosphatidylglycerol (LPG). It acts by transphosphatidylation, releasing exclusively cyclic phosphate products as second products. Induces dermonecrosis, hemolysis, increased vascular permeability, edema, inflammatory response, and platelet aggregation. In Loxosceles deserta (Desert recluse spider), this protein is Dermonecrotic toxin LdSicTox-alphaIB3aiv.